Here is a 457-residue protein sequence, read N- to C-terminus: Tryptophan aminotransferase-related protein 3 (457 aa).

The helical transmembrane segment at 6-26 (LLIAGSIILNLVFTIHILYNN) threads the bilayer. Pyridoxal 5'-phosphate is bound by residues tyrosine 123, 163 to 164 (AT), asparagine 237, 257 to 260 (DYAY), 280 to 283 (SLSK), and arginine 291. An N6-(pyridoxal phosphate)lysine modification is found at lysine 283.

This sequence belongs to the alliinase family. Requires pyridoxal 5'-phosphate as cofactor.

It localises to the membrane. In terms of biological role, probable aminotransferase. This is Tryptophan aminotransferase-related protein 3 (TAR3) from Arabidopsis thaliana (Mouse-ear cress).